The sequence spans 76 residues: CLAVATA3/ESR (CLE)-related protein 46 (76 aa).

The N-terminal stretch at 1 to 26 (MRRHDIIIKLLLLMCLLLSRFVTREC) is a signal peptide. A disordered region spans residues 53–76 (EEKKWHKHPSGPNPTGNRHPPVKH). Hydroxyproline occurs at positions 61 and 64. A glycan (O-linked (Ara...) hydroxyproline) is linked at proline 64.

This sequence belongs to the CLV3/ESR signal peptide family. Post-translationally, the O-glycosylation (arabinosylation) of the hydroxyproline Pro-64 enhances binding affinity of the CLE46p peptide for its receptor.

The protein resides in the secreted. It is found in the extracellular space. In terms of biological role, extracellular signal peptide that regulates cell fate. The protein is CLAVATA3/ESR (CLE)-related protein 46 of Arabidopsis thaliana (Mouse-ear cress).